A 270-amino-acid polypeptide reads, in one-letter code: NAD kinase (270 aa).

Aspartate 49 serves as the catalytic Proton acceptor. NAD(+) contacts are provided by residues 49–50, arginine 54, 126–127, arginine 152, aspartate 154, 165–170, alanine 189, and glutamine 227; these read DG, NE, and TAYNKS.

Belongs to the NAD kinase family. A divalent metal cation is required as a cofactor.

Its subcellular location is the cytoplasm. The enzyme catalyses NAD(+) + ATP = ADP + NADP(+) + H(+). In terms of biological role, involved in the regulation of the intracellular balance of NAD and NADP, and is a key enzyme in the biosynthesis of NADP. Catalyzes specifically the phosphorylation on 2'-hydroxyl of the adenosine moiety of NAD to yield NADP. In Lactococcus lactis subsp. cremoris (strain MG1363), this protein is NAD kinase.